Consider the following 106-residue polypeptide: Thiosulfate sulfurtransferase GlpE (106 aa).

One can recognise a Rhodanese domain in the interval 17–105 (EQNEARLVDI…SYRAELPVIA (89 aa)). The active-site Cysteine persulfide intermediate is cysteine 65.

It belongs to the GlpE family.

It localises to the cytoplasm. It carries out the reaction thiosulfate + hydrogen cyanide = thiocyanate + sulfite + 2 H(+). The catalysed reaction is thiosulfate + [thioredoxin]-dithiol = [thioredoxin]-disulfide + hydrogen sulfide + sulfite + 2 H(+). Transferase that catalyzes the transfer of sulfur from thiosulfate to thiophilic acceptors such as cyanide or dithiols. May function in a CysM-independent thiosulfate assimilation pathway by catalyzing the conversion of thiosulfate to sulfite, which can then be used for L-cysteine biosynthesis. The sequence is that of Thiosulfate sulfurtransferase GlpE from Vibrio atlanticus (strain LGP32) (Vibrio splendidus (strain Mel32)).